Here is a 378-residue protein sequence, read N- to C-terminus: Uroporphyrinogen decarboxylase (378 aa).

Residues 40-44, Asp90, Tyr167, Ser222, and His355 contribute to the substrate site; that span reads RQAGR.

This sequence belongs to the uroporphyrinogen decarboxylase family. As to quaternary structure, homodimer.

The protein localises to the cytoplasm. The enzyme catalyses uroporphyrinogen III + 4 H(+) = coproporphyrinogen III + 4 CO2. Its pathway is porphyrin-containing compound metabolism; protoporphyrin-IX biosynthesis; coproporphyrinogen-III from 5-aminolevulinate: step 4/4. In terms of biological role, catalyzes the decarboxylation of four acetate groups of uroporphyrinogen-III to yield coproporphyrinogen-III. This chain is Uroporphyrinogen decarboxylase, found in Psychrobacter arcticus (strain DSM 17307 / VKM B-2377 / 273-4).